Here is a 156-residue protein sequence, read N- to C-terminus: ATP synthase subunit b (156 aa).

Residues Leu-7–Pro-27 traverse the membrane as a helical segment.

This sequence belongs to the ATPase B chain family. In terms of assembly, F-type ATPases have 2 components, F(1) - the catalytic core - and F(0) - the membrane proton channel. F(1) has five subunits: alpha(3), beta(3), gamma(1), delta(1), epsilon(1). F(0) has three main subunits: a(1), b(2) and c(10-14). The alpha and beta chains form an alternating ring which encloses part of the gamma chain. F(1) is attached to F(0) by a central stalk formed by the gamma and epsilon chains, while a peripheral stalk is formed by the delta and b chains.

The protein localises to the cell inner membrane. F(1)F(0) ATP synthase produces ATP from ADP in the presence of a proton or sodium gradient. F-type ATPases consist of two structural domains, F(1) containing the extramembraneous catalytic core and F(0) containing the membrane proton channel, linked together by a central stalk and a peripheral stalk. During catalysis, ATP synthesis in the catalytic domain of F(1) is coupled via a rotary mechanism of the central stalk subunits to proton translocation. Functionally, component of the F(0) channel, it forms part of the peripheral stalk, linking F(1) to F(0). The chain is ATP synthase subunit b from Polaromonas naphthalenivorans (strain CJ2).